Reading from the N-terminus, the 251-residue chain is Ferritin-1, chloroplastic (251 aa).

The transit peptide at Met-1 to Thr-45 directs the protein to the chloroplast. Positions Asn-46 to Arg-78 are extension peptide (EP). The Ferritin-like diiron domain maps to Gln-79–Gly-232. Residues Glu-96, Glu-131, His-134, Glu-180, and Gln-214 each contribute to the Fe cation site.

This sequence belongs to the ferritin family. In terms of assembly, oligomer of 24 subunits. There are two types of subunits: L (light) chain and H (heavy) chain. The major chain can be light or heavy, depending on the species and tissue type. The functional molecule forms a roughly spherical shell with a diameter of 12 nm and contains a central cavity into which the insoluble mineral iron core is deposited.

Its subcellular location is the plastid. It is found in the chloroplast. It carries out the reaction 4 Fe(2+) + O2 + 4 H(+) = 4 Fe(3+) + 2 H2O. Functionally, stores iron in a soluble, non-toxic, readily available form. Important for iron homeostasis. Has ferroxidase activity. Iron is taken up in the ferrous form and deposited as ferric hydroxides after oxidation. This chain is Ferritin-1, chloroplastic (FER1), found in Nicotiana tabacum (Common tobacco).